Reading from the N-terminus, the 190-residue chain is Segregation and condensation protein B (190 aa).

The protein belongs to the ScpB family. In terms of assembly, homodimer. Homodimerization may be required to stabilize the binding of ScpA to the Smc head domains. Component of a cohesin-like complex composed of ScpA, ScpB and the Smc homodimer, in which ScpA and ScpB bind to the head domain of Smc. The presence of the three proteins is required for the association of the complex with DNA.

It is found in the cytoplasm. Participates in chromosomal partition during cell division. May act via the formation of a condensin-like complex containing Smc and ScpA that pull DNA away from mid-cell into both cell halves. In Bacillus thuringiensis subsp. konkukian (strain 97-27), this protein is Segregation and condensation protein B.